Here is a 252-residue protein sequence, read N- to C-terminus: 2-succinyl-6-hydroxy-2,4-cyclohexadiene-1-carboxylate synthase (252 aa).

The protein belongs to the AB hydrolase superfamily. MenH family. Monomer.

The catalysed reaction is 5-enolpyruvoyl-6-hydroxy-2-succinyl-cyclohex-3-ene-1-carboxylate = (1R,6R)-6-hydroxy-2-succinyl-cyclohexa-2,4-diene-1-carboxylate + pyruvate. It participates in quinol/quinone metabolism; 1,4-dihydroxy-2-naphthoate biosynthesis; 1,4-dihydroxy-2-naphthoate from chorismate: step 3/7. Its pathway is quinol/quinone metabolism; menaquinone biosynthesis. Functionally, catalyzes a proton abstraction reaction that results in 2,5-elimination of pyruvate from 2-succinyl-5-enolpyruvyl-6-hydroxy-3-cyclohexene-1-carboxylate (SEPHCHC) and the formation of 2-succinyl-6-hydroxy-2,4-cyclohexadiene-1-carboxylate (SHCHC). The polypeptide is 2-succinyl-6-hydroxy-2,4-cyclohexadiene-1-carboxylate synthase (Salmonella heidelberg (strain SL476)).